We begin with the raw amino-acid sequence, 185 residues long: Ribosome-recycling factor (185 aa).

It belongs to the RRF family.

The protein localises to the cytoplasm. In terms of biological role, responsible for the release of ribosomes from messenger RNA at the termination of protein biosynthesis. May increase the efficiency of translation by recycling ribosomes from one round of translation to another. This is Ribosome-recycling factor from Pectobacterium atrosepticum (strain SCRI 1043 / ATCC BAA-672) (Erwinia carotovora subsp. atroseptica).